The primary structure comprises 319 residues: Lipooligosaccharide heptosyltransferase 2 (319 aa).

Belongs to the glycosyltransferase 9 family.

The catalysed reaction is an L-alpha-D-Hep-(1-&gt;5)-[alpha-Kdo-(2-&gt;4)]-alpha-Kdo-(2-&gt;6)-lipid A + ADP-L-glycero-beta-D-manno-heptose = an L-alpha-D-Hep-(1-&gt;3)-L-alpha-D-Hep-(1-&gt;5)-[alpha-Kdo-(2-&gt;4)]-alpha-Kdo-(2-&gt;6)-lipid A + ADP + H(+). Its pathway is bacterial outer membrane biogenesis; LOS core biosynthesis. Functionally, glycosyltransferase involved in the biosynthesis of the core oligosaccharide region of lipooligosaccharide (LOS). Catalyzes the addition of the second heptose unit to the heptosyl-Kdo2-lipid A module. The chain is Lipooligosaccharide heptosyltransferase 2 from Campylobacter jejuni subsp. jejuni serotype O:2 (strain ATCC 700819 / NCTC 11168).